A 239-amino-acid chain; its full sequence is Fumarate reductase iron-sulfur subunit (239 aa).

A 2Fe-2S ferredoxin-type domain is found at 5–95; that stretch reads LTIRVFKYDP…DGVITLLPLP (91 aa). The [2Fe-2S] cluster site is built by Cys57, Cys62, Cys65, and Cys77. In terms of domain architecture, 4Fe-4S ferredoxin-type spans 142–171; the sequence is AQEVFELDRCIECGCCIAACGTKIMREDFV. The [4Fe-4S] cluster site is built by Cys151, Cys154, and Cys157. 3 residues coordinate [3Fe-4S] cluster: Cys161, Cys208, and Cys214. Cys218 serves as a coordination point for [4Fe-4S] cluster.

Belongs to the succinate dehydrogenase/fumarate reductase iron-sulfur protein family. As to quaternary structure, part of an enzyme complex containing three subunits: a flavoprotein (frdA), an iron-sulfur protein (frdB), and diheme cytochrome b (frdC). It depends on [2Fe-2S] cluster as a cofactor. [3Fe-4S] cluster is required as a cofactor. [4Fe-4S] cluster serves as cofactor.

It is found in the cell inner membrane. The catalysed reaction is a menaquinone + succinate = a menaquinol + fumarate. In terms of biological role, the fumarate reductase enzyme complex is required for fumarate respiration using formate or sulfide as electron donor. The polypeptide is Fumarate reductase iron-sulfur subunit (frdB) (Wolinella succinogenes (strain ATCC 29543 / DSM 1740 / CCUG 13145 / JCM 31913 / LMG 7466 / NCTC 11488 / FDC 602W) (Vibrio succinogenes)).